The primary structure comprises 173 residues: Putative phosphoesterase GWCH70_0799 (173 aa).

Histidine 34 serves as the catalytic Proton donor. Short sequence motifs (HXTX) lie at residues 34–37 and 115–118; these read HLTL and HITI. The Proton acceptor role is filled by histidine 115.

Belongs to the 2H phosphoesterase superfamily. YjcG family.

This Geobacillus sp. (strain WCH70) protein is Putative phosphoesterase GWCH70_0799.